The chain runs to 336 residues: Flap endonuclease 1 (336 aa).

The interval 1–98 is N-domain; sequence MGADIGDLFE…AEIEERKKRR (98 aa). Mg(2+)-binding residues include Asp27, Asp80, Glu151, Glu153, Asp172, Asp174, and Asp235. The tract at residues 115 to 256 is I-domain; the sequence is DAKKYAQAAG…KALNYIKTYG (142 aa). The tract at residues 328-336 is interaction with PCNA; it reads TQATLERWF.

This sequence belongs to the XPG/RAD2 endonuclease family. FEN1 subfamily. As to quaternary structure, interacts with PCNA. PCNA stimulates the nuclease activity without altering cleavage specificity. Mg(2+) serves as cofactor.

Functionally, structure-specific nuclease with 5'-flap endonuclease and 5'-3' exonuclease activities involved in DNA replication and repair. During DNA replication, cleaves the 5'-overhanging flap structure that is generated by displacement synthesis when DNA polymerase encounters the 5'-end of a downstream Okazaki fragment. Binds the unpaired 3'-DNA end and kinks the DNA to facilitate 5' cleavage specificity. Cleaves one nucleotide into the double-stranded DNA from the junction in flap DNA, leaving a nick for ligation. Also involved in the base excision repair (BER) pathway. Acts as a genome stabilization factor that prevents flaps from equilibrating into structures that lead to duplications and deletions. Also possesses 5'-3' exonuclease activity on nicked or gapped double-stranded DNA. This Archaeoglobus fulgidus (strain ATCC 49558 / DSM 4304 / JCM 9628 / NBRC 100126 / VC-16) protein is Flap endonuclease 1.